A 151-amino-acid chain; its full sequence is Large-conductance mechanosensitive channel (151 aa).

2 consecutive transmembrane segments (helical) span residues valine 19–leucine 39 and glycine 85–valine 105.

This sequence belongs to the MscL family. As to quaternary structure, homopentamer.

It localises to the cell inner membrane. In terms of biological role, channel that opens in response to stretch forces in the membrane lipid bilayer. May participate in the regulation of osmotic pressure changes within the cell. This Chlorobaculum parvum (strain DSM 263 / NCIMB 8327) (Chlorobium vibrioforme subsp. thiosulfatophilum) protein is Large-conductance mechanosensitive channel.